Reading from the N-terminus, the 73-residue chain is UPF0154 protein MG335.1 homolog (73 aa).

Residues 6 to 26 (LALGLGIPLSLLVGVIIGYFI) traverse the membrane as a helical segment.

This sequence belongs to the UPF0154 family.

Its subcellular location is the membrane. The polypeptide is UPF0154 protein MG335.1 homolog (Mycoplasma pneumoniae (strain ATCC 29342 / M129 / Subtype 1) (Mycoplasmoides pneumoniae)).